The primary structure comprises 109 residues: Aquaporin-2 (109 aa).

The Cytoplasmic portion of the chain corresponds to 1-6 (SVAFSR). The helical transmembrane segment at 7–27 (AVFAEFLATLLFVFFGLGSAL) threads the bilayer. The Extracellular portion of the chain corresponds to 28–35 (NWPQALPS). The chain crosses the membrane as a helical span at residues 36–54 (VLQIAMAFGLGIGTLVQAL). Topologically, residues 55–59 (GHVSG) are cytoplasmic. An intramembrane region (discontinuously helical) is located at residues 60–69 (AHINPAVTVA). Residues 63–65 (NPA) carry the NPA 1 motif. The Cytoplasmic segment spans residues 70–80 (CLVGCHVSFLR). A helical transmembrane segment spans residues 81 to 102 (AAFYVAAQLLGAVAGAALLHEI). Residues 103-109 (TPPHVRG) lie on the Extracellular side of the membrane.

Belongs to the MIP/aquaporin (TC 1.A.8) family. As to quaternary structure, homotetramer. Post-translationally, serine phosphorylation is necessary and sufficient for expression at the apical membrane. Endocytosis is not phosphorylation-dependent. N-glycosylated.

It localises to the apical cell membrane. The protein resides in the basolateral cell membrane. It is found in the cell membrane. The protein localises to the cytoplasmic vesicle membrane. Its subcellular location is the golgi apparatus. It localises to the trans-Golgi network membrane. It carries out the reaction H2O(in) = H2O(out). The enzyme catalyses glycerol(in) = glycerol(out). Functionally, forms a water-specific channel that provides the plasma membranes of renal collecting duct with high permeability to water, thereby permitting water to move in the direction of an osmotic gradient. Plays an essential role in renal water homeostasis. Could also be permeable to glycerol. This is Aquaporin-2 from Canis lupus familiaris (Dog).